The sequence spans 317 residues: ADP-L-glycero-D-manno-heptose-6-epimerase (317 aa).

NADP(+) is bound by residues 10–11, 31–32, Lys38, Lys53, 75–79, and Asn92; these read FI, DD, and QGACS. The active-site Proton acceptor is the Tyr139. An NADP(+)-binding site is contributed by Lys143. Residue Asn166 coordinates substrate. Residues Val167 and Lys175 each contribute to the NADP(+) site. Lys175 (proton acceptor) is an active-site residue. Substrate contacts are provided by residues Gly177, His184, 198-201, Arg211, and Tyr275; that span reads FQGH.

It belongs to the NAD(P)-dependent epimerase/dehydratase family. HldD subfamily. Homopentamer. The cofactor is NADP(+).

It catalyses the reaction ADP-D-glycero-beta-D-manno-heptose = ADP-L-glycero-beta-D-manno-heptose. It functions in the pathway nucleotide-sugar biosynthesis; ADP-L-glycero-beta-D-manno-heptose biosynthesis; ADP-L-glycero-beta-D-manno-heptose from D-glycero-beta-D-manno-heptose 7-phosphate: step 4/4. In terms of biological role, catalyzes the interconversion between ADP-D-glycero-beta-D-manno-heptose and ADP-L-glycero-beta-D-manno-heptose via an epimerization at carbon 6 of the heptose. The sequence is that of ADP-L-glycero-D-manno-heptose-6-epimerase from Shewanella loihica (strain ATCC BAA-1088 / PV-4).